Reading from the N-terminus, the 741-residue chain is Protein ACCUMULATION AND REPLICATION OF CHLOROPLASTS 3, chloroplastic (741 aa).

A chloroplast-targeting transit peptide spans methionine 1–asparagine 41. 2 disordered regions span residues glutamate 444 to aspartate 465 and aspartate 539 to threonine 558. A compositionally biased stretch (basic and acidic residues) spans tyrosine 451 to aspartate 465. Residues phenylalanine 546–threonine 558 are compositionally biased toward polar residues. MORN repeat units lie at residues glutamine 612 to serine 628, tyrosine 630 to valine 652, and phenylalanine 653 to arginine 675.

In terms of assembly, self-interacts. Interacts with FTSZ, CDP1/PARC6 (via N-terminus), MIND1 and MINE1. Part of a complex made of ARC3, ARC6, FTSZ1 and FTSZ2. Recruited to the middle of the plastid by CDP1/PARC6 where subsequent complex made of CDP1/PARC6, ARC3 and FtsZ proteins can form; this complex enhances the dynamics of Z rings during chloroplast division. Binding to FTSZ2-1 is enabled by ARC6.

The protein localises to the plastid. Its subcellular location is the chloroplast outer membrane. It localises to the chloroplast stroma. In terms of biological role, together with MIND1 and MCD1, regulates FtsZ ring positioning in chloroplasts in an ARC6-dependent manner. Z-ring accessory protein involved in the initiation of plastid division and division site placement (might functionally replace bacterial MinC). Acts as a disassembly factor that accelerates fragmentation and depolymerization of existing FtsZ2 filaments by enhancing FTSZ2 GTPase activity, thus leading to the conversion of FTSZ2 bound GTP into GDP, a process which triggers FtsZ2 filaments destabilization. Prevents misplaced Z-ring formation at chloroplast stroma nondivision sites. May control the rate of chloroplast expansion. Seems to influence stromule (stroma-filled tubular extensions of the plastid envelope membrane) length and frequency. The protein is Protein ACCUMULATION AND REPLICATION OF CHLOROPLASTS 3, chloroplastic of Arabidopsis thaliana (Mouse-ear cress).